The chain runs to 361 residues: Lipoyl synthase 1, chloroplastic (361 aa).

The [4Fe-4S] cluster site is built by C87, C92, C98, C124, C128, C131, and S339. The Radical SAM core domain occupies 107–328; that stretch reads GEGDGIATAT…KEYGESVGFR (222 aa).

Belongs to the radical SAM superfamily. Lipoyl synthase family. [4Fe-4S] cluster serves as cofactor.

The protein resides in the plastid. It localises to the chloroplast. It catalyses the reaction [[Fe-S] cluster scaffold protein carrying a second [4Fe-4S](2+) cluster] + N(6)-octanoyl-L-lysyl-[protein] + 2 oxidized [2Fe-2S]-[ferredoxin] + 2 S-adenosyl-L-methionine + 4 H(+) = [[Fe-S] cluster scaffold protein] + N(6)-[(R)-dihydrolipoyl]-L-lysyl-[protein] + 4 Fe(3+) + 2 hydrogen sulfide + 2 5'-deoxyadenosine + 2 L-methionine + 2 reduced [2Fe-2S]-[ferredoxin]. It functions in the pathway protein modification; protein lipoylation via endogenous pathway; protein N(6)-(lipoyl)lysine from octanoyl-[acyl-carrier-protein]: step 2/2. In terms of biological role, catalyzes the radical-mediated insertion of two sulfur atoms into the C-6 and C-8 positions of the octanoyl moiety bound to the lipoyl domains of lipoate-dependent enzymes, thereby converting the octanoylated domains into lipoylated derivatives. The chain is Lipoyl synthase 1, chloroplastic from Zea mays (Maize).